We begin with the raw amino-acid sequence, 346 residues long: Protein RecA (346 aa).

Residue 65-72 participates in ATP binding; sequence GPESSGKT.

The protein belongs to the RecA family.

It is found in the cytoplasm. Its function is as follows. Can catalyze the hydrolysis of ATP in the presence of single-stranded DNA, the ATP-dependent uptake of single-stranded DNA by duplex DNA, and the ATP-dependent hybridization of homologous single-stranded DNAs. It interacts with LexA causing its activation and leading to its autocatalytic cleavage. This chain is Protein RecA, found in Enterococcus mundtii.